Reading from the N-terminus, the 393-residue chain is NAD(P)H-quinone oxidoreductase subunit H, chloroplastic (393 aa).

This sequence belongs to the complex I 49 kDa subunit family. As to quaternary structure, NDH is composed of at least 16 different subunits, 5 of which are encoded in the nucleus.

It localises to the plastid. The protein resides in the chloroplast thylakoid membrane. It carries out the reaction a plastoquinone + NADH + (n+1) H(+)(in) = a plastoquinol + NAD(+) + n H(+)(out). It catalyses the reaction a plastoquinone + NADPH + (n+1) H(+)(in) = a plastoquinol + NADP(+) + n H(+)(out). In terms of biological role, NDH shuttles electrons from NAD(P)H:plastoquinone, via FMN and iron-sulfur (Fe-S) centers, to quinones in the photosynthetic chain and possibly in a chloroplast respiratory chain. The immediate electron acceptor for the enzyme in this species is believed to be plastoquinone. Couples the redox reaction to proton translocation, and thus conserves the redox energy in a proton gradient. This Hordeum vulgare (Barley) protein is NAD(P)H-quinone oxidoreductase subunit H, chloroplastic.